The sequence spans 346 residues: NADH-ubiquinone oxidoreductase chain 2 (346 aa).

A run of 10 helical transmembrane segments spans residues 25–45, 52–72, 95–115, 124–144, 149–169, 178–198, 200–220, 242–262, 274–294, and 326–346; these read HWIL…PLIS, AIEA…LILF, CLML…HFWF, LITA…LLLL, LNTT…GWMG, ILAF…SYNP, LTIL…LSLA, ATVM…GFMP, EMTP…FFYL, and AILT…ITML.

It belongs to the complex I subunit 2 family. In terms of assembly, core subunit of respiratory chain NADH dehydrogenase (Complex I) which is composed of 45 different subunits.

The protein resides in the mitochondrion inner membrane. The enzyme catalyses a ubiquinone + NADH + 5 H(+)(in) = a ubiquinol + NAD(+) + 4 H(+)(out). Core subunit of the mitochondrial membrane respiratory chain NADH dehydrogenase (Complex I) which catalyzes electron transfer from NADH through the respiratory chain, using ubiquinone as an electron acceptor. Essential for the catalytic activity and assembly of complex I. This Gallus gallus (Chicken) protein is NADH-ubiquinone oxidoreductase chain 2 (MT-ND2).